Here is a 270-residue protein sequence, read N- to C-terminus: Putative ABC transporter ATP-binding protein MG304 homolog (270 aa).

One can recognise an ABC transporter domain in the interval leucine 2–threonine 232. An ATP-binding site is contributed by glycine 36–serine 43.

The protein belongs to the ABC transporter superfamily.

The polypeptide is Putative ABC transporter ATP-binding protein MG304 homolog (Mycoplasma pneumoniae (strain ATCC 29342 / M129 / Subtype 1) (Mycoplasmoides pneumoniae)).